The following is a 338-amino-acid chain: Mitochondrial amidoxime reducing component 2 (338 aa).

The N-terminal 35 residues, 1–35, are a transit peptide targeting the mitochondrion; the sequence is MGSSSSTALARLGLPGQPRSTWLGVAALGLAAVAL. Residues Lys-59, Lys-138, and Lys-144 each participate in a glycyl lysine isopeptide (Lys-Gly) (interchain with G-Cter in ubiquitin) cross-link. At Lys-156 the chain carries N6-acetyllysine; alternate. A Glycyl lysine isopeptide (Lys-Gly) (interchain with G-Cter in ubiquitin); alternate cross-link involves residue Lys-156. Glycyl lysine isopeptide (Lys-Gly) (interchain with G-Cter in ubiquitin) cross-links involve residues Lys-173, Lys-187, Lys-289, and Lys-296. Positions 188 to 336 constitute an MOSC domain; it reads GRTTKKLYPS…LRVGDPVYRM (149 aa).

In terms of assembly, component of a complex composed of cytochrome b5, NADH-cytochrome b5 reductase (CYB5R3) and MTARC2. Mo-molybdopterin serves as cofactor. Ubiquitinated by PRKN during mitophagy, leading to its degradation and enhancement of mitophagy. Deubiquitinated by USP30.

It localises to the mitochondrion outer membrane. The protein resides in the peroxisome. The enzyme catalyses N(omega)-hydroxy-L-arginine + 2 Fe(II)-[cytochrome b5] + 2 H(+) = L-arginine + 2 Fe(III)-[cytochrome b5] + H2O. Functionally, catalyzes the reduction of N-oxygenated molecules, acting as a counterpart of cytochrome P450 and flavin-containing monooxygenases in metabolic cycles. As a component of prodrug-converting system, reduces a multitude of N-hydroxylated prodrugs particularly amidoximes, leading to increased drug bioavailability. May be involved in mitochondrial N(omega)-hydroxy-L-arginine (NOHA) reduction, regulating endogenous nitric oxide levels and biosynthesis. Postulated to cleave the N-OH bond of N-hydroxylated substrates in concert with electron transfer from NADH to cytochrome b5 reductase then to cytochrome b5, the ultimate electron donor that primes the active site for substrate reduction. The chain is Mitochondrial amidoxime reducing component 2 (Mtarc2) from Rattus norvegicus (Rat).